A 130-amino-acid chain; its full sequence is Small ribosomal subunit protein uS11 (130 aa).

The protein belongs to the universal ribosomal protein uS11 family. As to quaternary structure, part of the 30S ribosomal subunit. Interacts with proteins S7 and S18. Binds to IF-3.

Located on the platform of the 30S subunit, it bridges several disparate RNA helices of the 16S rRNA. Forms part of the Shine-Dalgarno cleft in the 70S ribosome. This chain is Small ribosomal subunit protein uS11, found in Teredinibacter turnerae (strain ATCC 39867 / T7901).